The sequence spans 504 residues: ATP synthase subunit alpha, chloroplastic (504 aa).

Residue 170-177 (GDRQTGKT) participates in ATP binding.

It belongs to the ATPase alpha/beta chains family. F-type ATPases have 2 components, CF(1) - the catalytic core - and CF(0) - the membrane proton channel. CF(1) has five subunits: alpha(3), beta(3), gamma(1), delta(1), epsilon(1). CF(0) has four main subunits: a, b, b' and c.

The protein resides in the plastid. The protein localises to the chloroplast thylakoid membrane. It catalyses the reaction ATP + H2O + 4 H(+)(in) = ADP + phosphate + 5 H(+)(out). In terms of biological role, produces ATP from ADP in the presence of a proton gradient across the membrane. The alpha chain is a regulatory subunit. In Triticum aestivum (Wheat), this protein is ATP synthase subunit alpha, chloroplastic.